The chain runs to 532 residues: Phosphoenolpyruvate carboxykinase (ATP) (532 aa).

Residues Arg-60, Tyr-194, and Lys-200 each coordinate substrate. Residues Lys-200, His-219, and 237-245 (GLSGTGKTT) each bind ATP. Lys-200 and His-219 together coordinate Mn(2+). Asp-258 contributes to the Mn(2+) binding site. Glu-286, Arg-324, and Thr-449 together coordinate ATP. Arg-324 serves as a coordination point for substrate.

Belongs to the phosphoenolpyruvate carboxykinase (ATP) family. The cofactor is Mn(2+).

The protein localises to the cytoplasm. The catalysed reaction is oxaloacetate + ATP = phosphoenolpyruvate + ADP + CO2. It participates in carbohydrate biosynthesis; gluconeogenesis. Its function is as follows. Involved in the gluconeogenesis. Catalyzes the conversion of oxaloacetate (OAA) to phosphoenolpyruvate (PEP) through direct phosphoryl transfer between the nucleoside triphosphate and OAA. The sequence is that of Phosphoenolpyruvate carboxykinase (ATP) from Paracoccus denitrificans (strain Pd 1222).